The following is a 340-amino-acid chain: Glycerol-3-phosphate dehydrogenase [NAD(P)+] (340 aa).

Residues Ser-11, Trp-12, Arg-33, and Lys-106 each coordinate NADPH. Sn-glycerol 3-phosphate is bound by residues Lys-106, Gly-137, and Ser-139. Ala-141 contacts NADPH. Positions 192, 245, 255, 256, and 257 each coordinate sn-glycerol 3-phosphate. Residue Lys-192 is the Proton acceptor of the active site. Residue Arg-256 participates in NADPH binding. 2 residues coordinate NADPH: Val-280 and Glu-282.

This sequence belongs to the NAD-dependent glycerol-3-phosphate dehydrogenase family.

It is found in the cytoplasm. It catalyses the reaction sn-glycerol 3-phosphate + NAD(+) = dihydroxyacetone phosphate + NADH + H(+). It carries out the reaction sn-glycerol 3-phosphate + NADP(+) = dihydroxyacetone phosphate + NADPH + H(+). It participates in membrane lipid metabolism; glycerophospholipid metabolism. Catalyzes the reduction of the glycolytic intermediate dihydroxyacetone phosphate (DHAP) to sn-glycerol 3-phosphate (G3P), the key precursor for phospholipid synthesis. The sequence is that of Glycerol-3-phosphate dehydrogenase [NAD(P)+] from Bacillus anthracis (strain A0248).